Consider the following 427-residue polypeptide: Enolase (427 aa).

A (2R)-2-phosphoglycerate-binding site is contributed by glutamine 162. The active-site Proton donor is glutamate 204. Mg(2+) contacts are provided by aspartate 241, glutamate 284, and aspartate 311. (2R)-2-phosphoglycerate is bound by residues lysine 336, arginine 365, serine 366, and lysine 387. Lysine 336 (proton acceptor) is an active-site residue.

It belongs to the enolase family. The cofactor is Mg(2+).

It localises to the cytoplasm. Its subcellular location is the secreted. The protein resides in the cell surface. The catalysed reaction is (2R)-2-phosphoglycerate = phosphoenolpyruvate + H2O. It participates in carbohydrate degradation; glycolysis; pyruvate from D-glyceraldehyde 3-phosphate: step 4/5. In terms of biological role, catalyzes the reversible conversion of 2-phosphoglycerate (2-PG) into phosphoenolpyruvate (PEP). It is essential for the degradation of carbohydrates via glycolysis. This Natranaerobius thermophilus (strain ATCC BAA-1301 / DSM 18059 / JW/NM-WN-LF) protein is Enolase.